The sequence spans 305 residues: Phosphoribosylaminoimidazole-succinocarboxamide synthase (305 aa).

This sequence belongs to the SAICAR synthetase family.

It catalyses the reaction 5-amino-1-(5-phospho-D-ribosyl)imidazole-4-carboxylate + L-aspartate + ATP = (2S)-2-[5-amino-1-(5-phospho-beta-D-ribosyl)imidazole-4-carboxamido]succinate + ADP + phosphate + 2 H(+). The protein operates within purine metabolism; IMP biosynthesis via de novo pathway; 5-amino-1-(5-phospho-D-ribosyl)imidazole-4-carboxamide from 5-amino-1-(5-phospho-D-ribosyl)imidazole-4-carboxylate: step 1/2. This chain is Phosphoribosylaminoimidazole-succinocarboxamide synthase, found in Albidiferax ferrireducens (strain ATCC BAA-621 / DSM 15236 / T118) (Rhodoferax ferrireducens).